A 184-amino-acid polypeptide reads, in one-letter code: Elongation factor P (184 aa).

The protein belongs to the elongation factor P family.

It localises to the cytoplasm. The protein operates within protein biosynthesis; polypeptide chain elongation. Its function is as follows. Involved in peptide bond synthesis. Stimulates efficient translation and peptide-bond synthesis on native or reconstituted 70S ribosomes in vitro. Probably functions indirectly by altering the affinity of the ribosome for aminoacyl-tRNA, thus increasing their reactivity as acceptors for peptidyl transferase. The chain is Elongation factor P from Paracidovorax citrulli (strain AAC00-1) (Acidovorax citrulli).